Consider the following 176-residue polypeptide: uncharacterized protein (176 aa).

Residues 1–22 form the signal peptide; that stretch reads MKYNNIIFLGLCLGLTTYSALS. Cysteine 38 and cysteine 78 form a disulfide bridge.

The protein belongs to the fimbrial protein family.

The protein localises to the fimbrium. This is an uncharacterized protein from Escherichia coli (strain K12).